The chain runs to 342 residues: Pre-mRNA-splicing factor 18 (342 aa).

Met1 is subject to N-acetylmethionine.

It belongs to the PRP18 family. As to quaternary structure, heterodimer with PPIH. Interacts with PRPF4 and with the spliceosome. Part of a complex containing U4/U6 snRNPs.

It is found in the nucleus speckle. In terms of biological role, participates in the second step of pre-mRNA splicing. The polypeptide is Pre-mRNA-splicing factor 18 (PRPF18) (Pongo abelii (Sumatran orangutan)).